A 252-amino-acid chain; its full sequence is Anamorsin homolog (252 aa).

The interval 1 to 153 is N-terminal SAM-like domain; the sequence is MINFSNTLII…AENPDFNKSD (153 aa). A linker region spans residues 153-166; that stretch reads DDDNNLVSSDEEIY. [2Fe-2S] cluster contacts are provided by C169, C180, C183, and C185. Residues 169-185 form a fe-S binding site A region; that stretch reads CEDKKKVVNRVCDNCTC. The [4Fe-4S] cluster site is built by C215, C218, C226, and C229. Short sequence motifs (cx2C motif) lie at residues 215–218 and 226–229; these read CGNC and CGSC. A fe-S binding site B region spans residues 215-229; that stretch reads CGNCYLGDAFRCGSC.

The protein belongs to the anamorsin family. Monomer. [2Fe-2S] cluster serves as cofactor. The cofactor is [4Fe-4S] cluster.

It is found in the cytoplasm. The protein resides in the mitochondrion intermembrane space. Component of the cytosolic iron-sulfur (Fe-S) protein assembly (CIA) machinery. Required for the maturation of extramitochondrial Fe-S proteins. Part of an electron transfer chain functioning in an early step of cytosolic Fe-S biogenesis, facilitating the de novo assembly of a [4Fe-4S] cluster on the cytosolic Fe-S scaffold complex. Electrons are transferred from NADPH via a FAD- and FMN-containing diflavin oxidoreductase. Together with the diflavin oxidoreductase, also required for the assembly of the diferric tyrosyl radical cofactor of ribonucleotide reductase (RNR), probably by providing electrons for reduction during radical cofactor maturation in the catalytic small subunit. The polypeptide is Anamorsin homolog (DRE2) (Plasmodium berghei (strain Anka)).